The sequence spans 368 residues: Seipin-1 (368 aa).

Transmembrane regions (helical) follow at residues 26 to 46 (WFMVLVTIQADLIYNALVVLS), 101 to 121 (VMVLALILAVVIGVGIVSLYV), and 292 to 312 (LCVWTSMYLYVAILTALLWCF). Residues 344–368 (MERRRRERRNQPRRRNFATTQKSYT) are disordered. Positions 346–359 (RRRRERRNQPRRRN) are enriched in basic residues.

Belongs to the seipin family. Expressed in seeds and young seedlings. Not detected in leaves.

It localises to the endoplasmic reticulum membrane. Its function is as follows. Involved in lipid metabolism and lipid droplet (LD) morphology, number, and size. Facilitates the formation of large-sized LDs and modulates triacylglycerol accumulation. Induces probably a reorganization of the endoplasmic reticulum into LD-forming domains. This Arabidopsis thaliana (Mouse-ear cress) protein is Seipin-1.